The primary structure comprises 514 residues: Peptide chain release factor 3 (514 aa).

The tr-type G domain occupies 8-268 (KKRRTFAIIS…TFLKFAPEPH (261 aa)). GTP-binding positions include 17 to 24 (SHPDAGKT), 85 to 89 (DTPGH), and 139 to 142 (NKLD).

The protein belongs to the TRAFAC class translation factor GTPase superfamily. Classic translation factor GTPase family. PrfC subfamily.

The protein localises to the cytoplasm. Functionally, increases the formation of ribosomal termination complexes and stimulates activities of RF-1 and RF-2. It binds guanine nucleotides and has strong preference for UGA stop codons. It may interact directly with the ribosome. The stimulation of RF-1 and RF-2 is significantly reduced by GTP and GDP, but not by GMP. The polypeptide is Peptide chain release factor 3 (Streptococcus pneumoniae (strain Hungary19A-6)).